Here is a 444-residue protein sequence, read N- to C-terminus: 23S rRNA (uracil(1939)-C(5))-methyltransferase RlmD (444 aa).

The TRAM domain maps to 5–67 (RNRFDRTPFQ…RHFDEAKTVE (63 aa)). C80, C86, C89, and C168 together coordinate [4Fe-4S] cluster. Q276, F305, N310, E326, D353, and D374 together coordinate S-adenosyl-L-methionine. C400 functions as the Nucleophile in the catalytic mechanism.

It belongs to the class I-like SAM-binding methyltransferase superfamily. RNA M5U methyltransferase family. RlmD subfamily.

The catalysed reaction is uridine(1939) in 23S rRNA + S-adenosyl-L-methionine = 5-methyluridine(1939) in 23S rRNA + S-adenosyl-L-homocysteine + H(+). Functionally, catalyzes the formation of 5-methyl-uridine at position 1939 (m5U1939) in 23S rRNA. The chain is 23S rRNA (uracil(1939)-C(5))-methyltransferase RlmD from Xanthomonas oryzae pv. oryzae (strain KACC10331 / KXO85).